The primary structure comprises 428 residues: 3-phosphoshikimate 1-carboxyvinyltransferase (428 aa).

3 residues coordinate 3-phosphoshikimate: Lys21, Ser22, and Arg26. A phosphoenolpyruvate-binding site is contributed by Lys21. 2 residues coordinate phosphoenolpyruvate: Gly91 and Arg119. Residues Ser164, Gln166, Asp311, and Lys338 each contribute to the 3-phosphoshikimate site. Phosphoenolpyruvate is bound at residue Gln166. The active-site Proton acceptor is Asp311. 2 residues coordinate phosphoenolpyruvate: Arg342 and Arg383.

This sequence belongs to the EPSP synthase family. As to quaternary structure, monomer.

The protein resides in the cytoplasm. It carries out the reaction 3-phosphoshikimate + phosphoenolpyruvate = 5-O-(1-carboxyvinyl)-3-phosphoshikimate + phosphate. It functions in the pathway metabolic intermediate biosynthesis; chorismate biosynthesis; chorismate from D-erythrose 4-phosphate and phosphoenolpyruvate: step 6/7. Functionally, catalyzes the transfer of the enolpyruvyl moiety of phosphoenolpyruvate (PEP) to the 5-hydroxyl of shikimate-3-phosphate (S3P) to produce enolpyruvyl shikimate-3-phosphate and inorganic phosphate. In Campylobacter concisus (strain 13826), this protein is 3-phosphoshikimate 1-carboxyvinyltransferase.